We begin with the raw amino-acid sequence, 102 residues long: Citrate lyase acyl carrier protein (102 aa).

Ser-14 is subject to O-(phosphoribosyl dephospho-coenzyme A)serine.

Belongs to the CitD family. Oligomer with a subunit composition of (alpha,beta,gamma)6.

Its subcellular location is the cytoplasm. In terms of biological role, covalent carrier of the coenzyme of citrate lyase. The protein is Citrate lyase acyl carrier protein of Streptococcus pyogenes serotype M2 (strain MGAS10270).